The following is a 438-amino-acid chain: Lipoyl synthase, mitochondrial (438 aa).

Residues 1 to 31 (MAASARGLRTLQSAHSSTTVPRLQLAVSRCY) constitute a mitochondrion transit peptide. The segment covering 34–57 (TTSPDPPITNSSNSSNSSNSTPTP) has biased composition (low complexity). The segment at 34–58 (TTSPDPPITNSSNSSNSSNSTPTPK) is disordered. Residues Cys-148, Cys-153, Cys-159, Cys-179, Cys-183, Cys-186, and Ser-394 each coordinate [4Fe-4S] cluster. In terms of domain architecture, Radical SAM core spans 162–383 (GSSKSAATAT…KERALEMGFL (222 aa)).

Belongs to the radical SAM superfamily. Lipoyl synthase family. It depends on [4Fe-4S] cluster as a cofactor.

Its subcellular location is the mitochondrion. It catalyses the reaction [[Fe-S] cluster scaffold protein carrying a second [4Fe-4S](2+) cluster] + N(6)-octanoyl-L-lysyl-[protein] + 2 oxidized [2Fe-2S]-[ferredoxin] + 2 S-adenosyl-L-methionine + 4 H(+) = [[Fe-S] cluster scaffold protein] + N(6)-[(R)-dihydrolipoyl]-L-lysyl-[protein] + 4 Fe(3+) + 2 hydrogen sulfide + 2 5'-deoxyadenosine + 2 L-methionine + 2 reduced [2Fe-2S]-[ferredoxin]. It functions in the pathway protein modification; protein lipoylation via endogenous pathway; protein N(6)-(lipoyl)lysine from octanoyl-[acyl-carrier-protein]: step 2/2. In terms of biological role, catalyzes the radical-mediated insertion of two sulfur atoms into the C-6 and C-8 positions of the octanoyl moiety bound to the lipoyl domains of lipoate-dependent enzymes, thereby converting the octanoylated domains into lipoylated derivatives. This is Lipoyl synthase, mitochondrial from Paracoccidioides brasiliensis (strain Pb18).